The sequence spans 621 residues: Endoglucanase 25 (621 aa).

The disordered stretch occupies residues 1–26; it reads MYGRDPWGGPLEINTADSATDDDRSR. Over 1–70 the chain is Cytoplasmic; sequence MYGRDPWGGP…DLGCIIVSRK (70 aa). The interval 48-49 is polarized targeting signal 1 (PTS1); it reads LL. The tract at residues 59–62 is polarized targeting signal 2 (PTS2); that stretch reads YVDL. The helical; Signal-anchor for type II membrane protein transmembrane segment at 71 to 91 threads the bilayer; that stretch reads IFVWTVGTLVAAALLAGFITL. Residues 92–621 lie on the Extracellular side of the membrane; sequence IVKTVPRHHP…PPPPPAPWKP (530 aa). N-linked (GlcNAc...) asparagine glycosylation is found at Asn108 and Asn133. Asp165 acts as the Nucleophile in catalysis. Residues Asn216, Asn324, Asn345, Asn408, and Asn425 are each glycosylated (N-linked (GlcNAc...) asparagine). Catalysis depends on residues His513 and Asp561. Asn567 is a glycosylation site (N-linked (GlcNAc...) asparagine). The active site involves Glu570.

This sequence belongs to the glycosyl hydrolase 9 (cellulase E) family. Glycosylated. N-glycosylation of KOR in the endoplasmic reticulum followed by N-glycan modifications in the Golgi are essential for catalytic activity. Highly expressed in roots and stems, at intermediate levels in leaves and flowers, and at lower levels in siliques. Expressed in xylem (at protein level).

The protein resides in the cell membrane. The catalysed reaction is Endohydrolysis of (1-&gt;4)-beta-D-glucosidic linkages in cellulose, lichenin and cereal beta-D-glucans.. In terms of biological role, required for cellulose microfibril formation. Involved in cell wall assembly during cell elongation and cell plate maturation in cytokinesis. Required for secondary cell wall formation in the developing xylem. May cycle through different intracellular compartments, including plasma membrane. This is Endoglucanase 25 (KOR) from Arabidopsis thaliana (Mouse-ear cress).